Here is a 340-residue protein sequence, read N- to C-terminus: Glycerol-3-phosphate dehydrogenase [NAD(P)+] (340 aa).

The NADPH site is built by S11, W12, R33, and K106. Sn-glycerol 3-phosphate contacts are provided by K106, G137, and S139. A141 lines the NADPH pocket. K192, D245, S255, R256, and N257 together coordinate sn-glycerol 3-phosphate. The active-site Proton acceptor is K192. R256 is a binding site for NADPH. Residues V280 and E282 each contribute to the NADPH site.

The protein belongs to the NAD-dependent glycerol-3-phosphate dehydrogenase family.

It is found in the cytoplasm. It carries out the reaction sn-glycerol 3-phosphate + NAD(+) = dihydroxyacetone phosphate + NADH + H(+). The enzyme catalyses sn-glycerol 3-phosphate + NADP(+) = dihydroxyacetone phosphate + NADPH + H(+). The protein operates within membrane lipid metabolism; glycerophospholipid metabolism. In terms of biological role, catalyzes the reduction of the glycolytic intermediate dihydroxyacetone phosphate (DHAP) to sn-glycerol 3-phosphate (G3P), the key precursor for phospholipid synthesis. This is Glycerol-3-phosphate dehydrogenase [NAD(P)+] from Bacillus mycoides (strain KBAB4) (Bacillus weihenstephanensis).